Reading from the N-terminus, the 1172-residue chain is Carbamoyl phosphate synthase arginine-specific large chain, chloroplastic (1172 aa).

Residues methionine 1–threonine 10 are compositionally biased toward polar residues. A disordered region spans residues methionine 1–histidine 37. A chloroplast-targeting transit peptide spans methionine 1–arginine 50. The carboxyphosphate synthetic domain stretch occupies residues glycine 72–glutamate 473. The ATP site is built by arginine 199, arginine 240, glycine 246, glycine 247, lysine 279, leucine 281, glutamate 286, glycine 312, valine 313, histidine 314, glutamine 356, and glutamate 370. The ATP-grasp 1 domain occupies lysine 203 to valine 399. 3 residues coordinate Mg(2+): glutamine 356, glutamate 370, and asparagine 372. Residues threonine 474–serine 623 form an oligomerization domain region. Positions valine 624–alanine 1019 are carbamoyl phosphate synthetic domain. Positions asparagine 761–serine 954 constitute an ATP-grasp 2 domain. 10 residues coordinate ATP: arginine 797, lysine 836, leucine 838, glutamate 843, glycine 869, isoleucine 870, histidine 871, serine 872, glutamine 912, and glutamate 925. Residues glutamine 912, glutamate 925, and asparagine 927 each coordinate Mg(2+). The segment at glycine 1020 to serine 1172 is allosteric domain. Residues glutamine 1021–serine 1162 enclose the MGS-like domain.

This sequence belongs to the CarB family. In terms of assembly, heterodimer composed of 2 chains; the small (or glutamine) chain promotes the hydrolysis of glutamine to ammonia, which is used by the large (or ammonia) chain to synthesize carbamoyl phosphate. It depends on Mg(2+) as a cofactor. Mn(2+) serves as cofactor.

The protein resides in the plastid. Its subcellular location is the chloroplast. It catalyses the reaction hydrogencarbonate + L-glutamine + 2 ATP + H2O = carbamoyl phosphate + L-glutamate + 2 ADP + phosphate + 2 H(+). The catalysed reaction is hydrogencarbonate + NH4(+) + 2 ATP = carbamoyl phosphate + 2 ADP + phosphate + 2 H(+). The protein operates within amino-acid biosynthesis; L-arginine biosynthesis; carbamoyl phosphate from bicarbonate: step 1/1. Its function is as follows. Large subunit of the arginine-specific carbamoyl phosphate synthase (CPSase). CPSase catalyzes the formation of carbamoyl phosphate from the ammonia moiety of glutamine, hydrogencarbonate, and phosphate donated by ATP, constituting the first step of 2 biosynthetic pathways, one leading to arginine and/or urea and the other to pyrimidine nucleotides. The large subunit (synthetase) binds the substrates ammonia (free or transferred from glutamine from the small subunit), hydrogencarbonate and ATP and carries out an ATP-coupled ligase reaction, activating hydrogencarbonate by forming carboxy phosphate which reacts with ammonia to form carbamoyl phosphate. This chain is Carbamoyl phosphate synthase arginine-specific large chain, chloroplastic (CARB), found in Oryza sativa subsp. japonica (Rice).